Here is a 463-residue protein sequence, read N- to C-terminus: ATP sulfurylase 1, chloroplastic (463 aa).

A chloroplast-targeting transit peptide spans 1 to 48 (MASMAAVLSKTPFLSQPLTKSSPNSDLPFAAVSFPSKSLRRRVGSIRA).

The protein belongs to the sulfate adenylyltransferase family. As to quaternary structure, homotetramer.

The protein localises to the plastid. Its subcellular location is the chloroplast stroma. It catalyses the reaction sulfate + ATP + H(+) = adenosine 5'-phosphosulfate + diphosphate. The protein operates within sulfur metabolism; hydrogen sulfide biosynthesis; sulfite from sulfate: step 1/3. In terms of biological role, mediates selenate (Se) reduction, and promotes Se and sulfur (S) uptake and assimilation. The sequence is that of ATP sulfurylase 1, chloroplastic (APS1) from Arabidopsis thaliana (Mouse-ear cress).